The following is a 357-amino-acid chain: Aminomethyltransferase (357 aa).

Belongs to the GcvT family. In terms of assembly, the glycine cleavage system is composed of four proteins: P, T, L and H.

The enzyme catalyses N(6)-[(R)-S(8)-aminomethyldihydrolipoyl]-L-lysyl-[protein] + (6S)-5,6,7,8-tetrahydrofolate = N(6)-[(R)-dihydrolipoyl]-L-lysyl-[protein] + (6R)-5,10-methylene-5,6,7,8-tetrahydrofolate + NH4(+). Functionally, the glycine cleavage system catalyzes the degradation of glycine. This chain is Aminomethyltransferase, found in Halothermothrix orenii (strain H 168 / OCM 544 / DSM 9562).